The sequence spans 316 residues: Dof zinc finger protein DOF5.7 (316 aa).

The tract at residues M1–K42 is disordered. Residues S21–K42 are compositionally biased toward polar residues. The Dof-type zinc finger occupies L41–K95. The Zn(2+) site is built by C43, C46, C68, and C71. Disordered regions lie at residues K92–S111 and N257–G294. A compositionally biased stretch (low complexity) spans S101 to S111. Polar residues predominate over residues N257–N291.

It is found in the nucleus. Functionally, transcription factor that binds specifically to a 5'-AA[AG]G-3' consensus core sequence. The protein is Dof zinc finger protein DOF5.7 (DOF5.7) of Arabidopsis thaliana (Mouse-ear cress).